We begin with the raw amino-acid sequence, 108 residues long: Protein Asterix (108 aa).

Residues 1–29 (MNMTVDPRRKEKINRYKAPKNQGQSGGAN) form a disordered region. The chain crosses the membrane as a helical span at residues 80–96 (VLSSFMLSVSAVVMSYL).

The protein belongs to the Asterix family.

It localises to the membrane. The sequence is that of Protein Asterix from Drosophila melanogaster (Fruit fly).